The following is a 25-amino-acid chain: Non-specific lipid-transfer protein 3 (25 aa).

As to expression, seeds (at protein level).

Plant non-specific lipid-transfer proteins transfer phospholipids as well as galactolipids across membranes. May play a role in wax or cutin deposition in the cell walls of expanding epidermal cells and certain secretory tissues. Has antibacterial and antifungal activity. Displays antibacterial activity towards both Gram-negative bacteria, P.carotovorum (IC(50)=11.5 uM) and P.syringae (IC(50)=12.0 uM), and Gram-positive bacterium C.michiganensis subsp michiganense (IC(50)=11.2 uM). Also displays antifungal activity towards A.niger VKM F-33 (IC(50)=1.05 uM) and B.cinerea TSKHA (IC(50)=1.88 uM) and relatively moderate activity towards B.sorokiniana VKM F-1448 (IC(50)=1.55 uM). Displays some inhibitory activity towards P.infestans OSV12. The polypeptide is Non-specific lipid-transfer protein 3 (Nigella sativa (Black cumin)).